We begin with the raw amino-acid sequence, 393 residues long: Dual-specificity RNA methyltransferase RlmN (393 aa).

Glu-114 functions as the Proton acceptor in the catalytic mechanism. The Radical SAM core domain occupies 120–359 (EDDRATLCVS…VIVRKTRGDD (240 aa)). Cys-127 and Cys-364 are oxidised to a cystine. Residues Cys-134, Cys-138, and Cys-141 each contribute to the [4Fe-4S] cluster site. Residues 188–189 (GE), Ser-220, 242–244 (SLH), and Asn-321 each bind S-adenosyl-L-methionine. Residue Cys-364 is the S-methylcysteine intermediate of the active site.

This sequence belongs to the radical SAM superfamily. RlmN family. [4Fe-4S] cluster serves as cofactor.

It is found in the cytoplasm. It carries out the reaction adenosine(2503) in 23S rRNA + 2 reduced [2Fe-2S]-[ferredoxin] + 2 S-adenosyl-L-methionine = 2-methyladenosine(2503) in 23S rRNA + 5'-deoxyadenosine + L-methionine + 2 oxidized [2Fe-2S]-[ferredoxin] + S-adenosyl-L-homocysteine. It catalyses the reaction adenosine(37) in tRNA + 2 reduced [2Fe-2S]-[ferredoxin] + 2 S-adenosyl-L-methionine = 2-methyladenosine(37) in tRNA + 5'-deoxyadenosine + L-methionine + 2 oxidized [2Fe-2S]-[ferredoxin] + S-adenosyl-L-homocysteine. In terms of biological role, specifically methylates position 2 of adenine 2503 in 23S rRNA and position 2 of adenine 37 in tRNAs. m2A2503 modification seems to play a crucial role in the proofreading step occurring at the peptidyl transferase center and thus would serve to optimize ribosomal fidelity. The protein is Dual-specificity RNA methyltransferase RlmN of Actinobacillus pleuropneumoniae serotype 5b (strain L20).